We begin with the raw amino-acid sequence, 104 residues long: DNA-directed RNA polymerase subunit Rpo13 (104 aa).

Disordered regions lie at residues 1–33 (MVSG…EDEF) and 78–104 (RDSR…SVEG). The span at 7–31 (TDEEKEGTSDEEVNEEKEVEETSED) shows a compositional bias: acidic residues. Over residues 80-104 (SRRKAKKAVSKKVKKTKKKEKSVEG) the composition is skewed to basic residues.

This sequence belongs to the archaeal Rpo13 RNA polymerase subunit family. In terms of assembly, part of the 13-subunit RNA polymerase complex.

The protein localises to the cytoplasm. The enzyme catalyses RNA(n) + a ribonucleoside 5'-triphosphate = RNA(n+1) + diphosphate. DNA-dependent RNA polymerase (RNAP) catalyzes the transcription of DNA into RNA using the four ribonucleoside triphosphates as substrates. Probably binds dsDNA. The protein is DNA-directed RNA polymerase subunit Rpo13 of Saccharolobus solfataricus (strain ATCC 35092 / DSM 1617 / JCM 11322 / P2) (Sulfolobus solfataricus).